The chain runs to 40 residues: Subtilisin-like serine protease AS-E1 (40 aa).

Positions 4–40 constitute a Peptidase S8 domain; it reads PWGLARISHRTTGATSYVYDDSAGEGTCSYIIDTGIY. Asp36 acts as the Charge relay system in catalysis.

This sequence belongs to the peptidase S8 family. In terms of assembly, homodimer.

Strongly inhibited by antipain and PMSF. Inhibited by benzamidine and aprotinin by 80% and 17% respectively. Little or no inhibition by EDTA, E-64, iodoacetic acid, leupeptin and FUT-175. In terms of biological role, subtilisin-like serine protease. Cleaves prothrombin at 155-Arg-|-Ser-156, 45-Thr-|-Ala-46 and 316-Tyr-|-Ile-317 to produce meizothrombin(desF1)-like molecules. Degrades fibrinogen. Inhibits plasma coagulation. This Acremonium sp protein is Subtilisin-like serine protease AS-E1.